Reading from the N-terminus, the 281-residue chain is 2,3,4,5-tetrahydropyridine-2,6-dicarboxylate N-succinyltransferase (281 aa).

It belongs to the transferase hexapeptide repeat family.

It is found in the cytoplasm. It catalyses the reaction (S)-2,3,4,5-tetrahydrodipicolinate + succinyl-CoA + H2O = (S)-2-succinylamino-6-oxoheptanedioate + CoA. It functions in the pathway amino-acid biosynthesis; L-lysine biosynthesis via DAP pathway; LL-2,6-diaminopimelate from (S)-tetrahydrodipicolinate (succinylase route): step 1/3. The polypeptide is 2,3,4,5-tetrahydropyridine-2,6-dicarboxylate N-succinyltransferase (Methylobacterium sp. (strain 4-46)).